The following is a 443-amino-acid chain: Probable D-serine dehydratase (443 aa).

K118 is subject to N6-(pyridoxal phosphate)lysine.

It belongs to the serine/threonine dehydratase family. DsdA subfamily. It depends on pyridoxal 5'-phosphate as a cofactor.

The catalysed reaction is D-serine = pyruvate + NH4(+). This is Probable D-serine dehydratase from Vibrio campbellii (strain ATCC BAA-1116).